Consider the following 268-residue polypeptide: uncharacterized protein (268 aa).

Belongs to the LarE family.

This is an uncharacterized protein from Synechocystis sp. (strain ATCC 27184 / PCC 6803 / Kazusa).